Here is a 377-residue protein sequence, read N- to C-terminus: Putative glutamate--cysteine ligase 2 (377 aa).

It belongs to the glutamate--cysteine ligase type 2 family. YbdK subfamily.

The catalysed reaction is L-cysteine + L-glutamate + ATP = gamma-L-glutamyl-L-cysteine + ADP + phosphate + H(+). In terms of biological role, ATP-dependent carboxylate-amine ligase which exhibits weak glutamate--cysteine ligase activity. The polypeptide is Putative glutamate--cysteine ligase 2 (Ralstonia pickettii (strain 12J)).